Here is an 85-residue protein sequence, read N- to C-terminus: U4-theraphotoxin-Hhn1a (85 aa).

Residues 1–22 form the signal peptide; the sequence is MKVTLIAILTCATVLVLHTTAA. The propeptide occupies 23–48; that stretch reads EELEAESQLMEVGMPDTELAAVDEER. 3 disulfides stabilise this stretch: cysteine 52-cysteine 66, cysteine 56-cysteine 77, and cysteine 71-cysteine 82.

Belongs to the neurotoxin 12 (Hwtx-2) family. 02 (Hwtx-2) subfamily. Monomer. As to expression, expressed by the venom gland.

It localises to the secreted. Its function is as follows. Neurotoxin active on both insects and mammals. The sequence is that of U4-theraphotoxin-Hhn1a from Cyriopagopus hainanus (Chinese bird spider).